A 284-amino-acid polypeptide reads, in one-letter code: L-ribulose-5-phosphate 3-epimerase UlaE (284 aa).

This sequence belongs to the L-ribulose-5-phosphate 3-epimerase family.

It carries out the reaction L-ribulose 5-phosphate = L-xylulose 5-phosphate. It participates in cofactor degradation; L-ascorbate degradation; D-xylulose 5-phosphate from L-ascorbate: step 3/4. Catalyzes the isomerization of L-xylulose-5-phosphate to L-ribulose-5-phosphate. Is involved in the anaerobic L-ascorbate utilization. The chain is L-ribulose-5-phosphate 3-epimerase UlaE from Shigella sonnei (strain Ss046).